The chain runs to 150 residues: Large ribosomal subunit protein bL9 (150 aa).

The protein belongs to the bacterial ribosomal protein bL9 family.

Binds to the 23S rRNA. The protein is Large ribosomal subunit protein bL9 of Clavibacter sepedonicus (Clavibacter michiganensis subsp. sepedonicus).